We begin with the raw amino-acid sequence, 330 residues long: L-lactate dehydrogenase (330 aa).

Residues Val31, Asp52, Lys57, and 96–97 (GA) each bind NAD(+). Substrate is bound by residues Gln99, Arg105, and 137–140 (NPVD). NAD(+)-binding positions include 135-137 (VSN) and Ser160. Position 165–168 (165–168 (DTAR)) interacts with substrate. Residues Arg170 and His185 each contribute to the beta-D-fructose 1,6-bisphosphate site. His192 serves as the catalytic Proton acceptor. Tyr238 bears the Phosphotyrosine mark. Thr247 contributes to the substrate binding site.

This sequence belongs to the LDH/MDH superfamily. LDH family. Homotetramer.

The protein localises to the cytoplasm. It catalyses the reaction (S)-lactate + NAD(+) = pyruvate + NADH + H(+). The protein operates within fermentation; pyruvate fermentation to lactate; (S)-lactate from pyruvate: step 1/1. Its activity is regulated as follows. Allosterically activated by fructose 1,6-bisphosphate (FBP). In terms of biological role, catalyzes the conversion of lactate to pyruvate. The polypeptide is L-lactate dehydrogenase (Gloeobacter violaceus (strain ATCC 29082 / PCC 7421)).